A 162-amino-acid polypeptide reads, in one-letter code: Ribonuclease (162 aa).

Residues 1-29 (MKKISSVFTMFALIAAILFSGFIPQQAYA) form the signal peptide. Positions 30-53 (ETPLTQTATNETATIQLTSDVHTL) are excised as a propeptide. Glu125 acts as the Proton acceptor in catalysis. Catalysis depends on His154, which acts as the Proton donor.

This sequence belongs to the ribonuclease N1/T1 family.

Its subcellular location is the secreted. Functionally, this is a purine-specific ribonuclease. This is Ribonuclease from Bacillus intermedius.